We begin with the raw amino-acid sequence, 144 residues long: Protection of telomeres protein 1c (144 aa).

Belongs to the telombin family. Expressed at extremely low levels at the limit of detection.

Its subcellular location is the nucleus. The protein resides in the chromosome. It localises to the telomere. Functionally, binds specifically single-stranded telomeric DNA with weak affinity. Has probably no function in the regulation of telomere length. The protein is Protection of telomeres protein 1c of Arabidopsis thaliana (Mouse-ear cress).